Reading from the N-terminus, the 191-residue chain is Protein GrpE (191 aa).

Belongs to the GrpE family. As to quaternary structure, homodimer.

Its subcellular location is the cytoplasm. Its function is as follows. Participates actively in the response to hyperosmotic and heat shock by preventing the aggregation of stress-denatured proteins, in association with DnaK and GrpE. It is the nucleotide exchange factor for DnaK and may function as a thermosensor. Unfolded proteins bind initially to DnaJ; upon interaction with the DnaJ-bound protein, DnaK hydrolyzes its bound ATP, resulting in the formation of a stable complex. GrpE releases ADP from DnaK; ATP binding to DnaK triggers the release of the substrate protein, thus completing the reaction cycle. Several rounds of ATP-dependent interactions between DnaJ, DnaK and GrpE are required for fully efficient folding. The polypeptide is Protein GrpE (Listeria welshimeri serovar 6b (strain ATCC 35897 / DSM 20650 / CCUG 15529 / CIP 8149 / NCTC 11857 / SLCC 5334 / V8)).